We begin with the raw amino-acid sequence, 81 residues long: Putative membrane protein insertion efficiency factor (81 aa).

The protein belongs to the UPF0161 family.

It localises to the cell membrane. In terms of biological role, could be involved in insertion of integral membrane proteins into the membrane. This Geobacillus kaustophilus (strain HTA426) protein is Putative membrane protein insertion efficiency factor.